Consider the following 161-residue polypeptide: MPSFDIVSKVEMQEVDNAVNQAIKEIGQRYDFKGSKSEITQEKDAIKVLADDDYKLKAVIDVLQSKLHKRNISIKSLQYGKVEPASGGMVRQIISVQQGISKEKGKEIIAVIKESKLKVQAQIQDDQVRVTGKNRDDLQDTIQLLKGKDLDIEMQFTNFRE.

It belongs to the YajQ family.

Nucleotide-binding protein. This Trichlorobacter lovleyi (strain ATCC BAA-1151 / DSM 17278 / SZ) (Geobacter lovleyi) protein is Nucleotide-binding protein Glov_3198.